A 393-amino-acid chain; its full sequence is Leucine aminopeptidase 1 (393 aa).

The signal sequence occupies residues 1 to 18 (MKLSQVSALAACVPAATA). Residues 19–84 (RFVELMEADH…GSQGLRIKES (66 aa)) constitute a propeptide that is removed on maturation. N176 is a glycosylation site (N-linked (GlcNAc...) asparagine). Positions 184, 202, 241, and 268 each coordinate Zn(2+). C317 and C321 are oxidised to a cystine. Residue H350 participates in Zn(2+) binding.

It belongs to the peptidase M28 family. M28E subfamily. As to quaternary structure, monomer. Zn(2+) serves as cofactor.

It is found in the secreted. Its function is as follows. Extracellular aminopeptidase that allows assimilation of proteinaceous substrates. The polypeptide is Leucine aminopeptidase 1 (LAP1) (Metarhizium robertsii (strain ARSEF 23 / ATCC MYA-3075) (Metarhizium anisopliae (strain ARSEF 23))).